A 103-amino-acid polypeptide reads, in one-letter code: Small ribosomal subunit protein uS10 (103 aa).

This sequence belongs to the universal ribosomal protein uS10 family. Part of the 30S ribosomal subunit.

Its function is as follows. Involved in the binding of tRNA to the ribosomes. This is Small ribosomal subunit protein uS10 from Jannaschia sp. (strain CCS1).